The chain runs to 620 residues: MANHSSLPSQKYAASERQEYQKPQQNEEEIFYSVSRAAYLTVFKSSLDNITTKDQLQLVLQQTGRNPSNRVLNKYWTPRTKELNFDDFCAILKKEKPATKNELLKAFRKIDTNNKGYILHNDLYEILTTKGEKMSQEEVNSVFRLAEVNSNGKLDYNKFCSTFFKTCEQCAKVASERMDSNSKAKRQQFGSYIEKSPERSSSPKSSHGNLKLFDSETSTRKENKSSRPSSARSYKATMSTVINMGIPGTRTAKLIEPNNLKDWHTTSTKGCFFLEDNGDIISHHYKLQVSEKSTVYLTIKPLNLSKVEGKPSPWMSVDTSLFILKENNGRADLVSFTELRNQETSGWKGELGVGVYWLIPFTTGCRLRKKKKQTIKEARLVYRDGNEDLVLTPEFKSALSDMFDIIDLDGNGLLSLAEYNFFEMRTSGEKCDLDAWEVCKENFETKKNELTRQGFMELNLMEANDREGDPSDLWVTLQTMGYNKALEMTEACPFVIEVHAEKCSPRLKAVSLESSNKQLQGAVCKSVKLKGDAKPMDRYEDVIVYTYKNDTHVTSVMENKSDEKLILQVNNEQCKNCISSRGLQVFAVELLPKSVMVCQHVMPLNEKQEWMYNCVQNILS.

Residues 1–24 (MANHSSLPSQKYAASERQEYQKPQ) form a disordered region. 2 consecutive EF-hand domains span residues 98–133 (ATKN…KGEK) and 134–169 (MSQE…TCEQ). The disordered stretch occupies residues 176-234 (ERMDSNSKAKRQQFGSYIEKSPERSSSPKSSHGNLKLFDSETSTRKENKSSRPSSARSY). Over residues 213–225 (FDSETSTRKENKS) the composition is skewed to basic and acidic residues. The EF-hand 3 domain occupies 394–429 (EFKSALSDMFDIIDLDGNGLLSLAEYNFFEMRTSGE). 4 residues coordinate Ca(2+): Asp-407, Asp-409, Asn-411, and Glu-418.

Its subcellular location is the cell projection. It is found in the cilium membrane. Its function is as follows. Plays a role in the ciliary Hedgehog (Hh) signaling. This Xenopus laevis (African clawed frog) protein is EF-hand calcium-binding domain-containing protein 7 (efcab7).